The sequence spans 790 residues: Penicillin-binding protein 1A (790 aa).

Residues 1 to 6 are Cytoplasmic-facing; it reads MYKSLL. Residues 7-27 form a helical; Signal-anchor for type II membrane protein membrane-spanning segment; the sequence is FCLKIFVFLILVGCGITAYII. The Periplasmic portion of the chain corresponds to 28 to 790; that stretch reads YHYSRDLPDY…SKEDQSQEIY (763 aa). The transglycosylase stretch occupies residues 49-220; the sequence is TRIYSRDGKL…SELNPERNYA (172 aa). Residue Glu87 is the Proton donor; for transglycosylase activity of the active site. The tract at residues 398-711 is transpeptidase; it reads DVIVVEAIKE…SNVVLPIFID (314 aa). Residue Ser457 is the Acyl-ester intermediate; for transpeptidase activity of the active site.

This sequence in the N-terminal section; belongs to the glycosyltransferase 51 family. The protein in the C-terminal section; belongs to the transpeptidase family.

The protein resides in the cell inner membrane. It carries out the reaction [GlcNAc-(1-&gt;4)-Mur2Ac(oyl-L-Ala-gamma-D-Glu-L-Lys-D-Ala-D-Ala)](n)-di-trans,octa-cis-undecaprenyl diphosphate + beta-D-GlcNAc-(1-&gt;4)-Mur2Ac(oyl-L-Ala-gamma-D-Glu-L-Lys-D-Ala-D-Ala)-di-trans,octa-cis-undecaprenyl diphosphate = [GlcNAc-(1-&gt;4)-Mur2Ac(oyl-L-Ala-gamma-D-Glu-L-Lys-D-Ala-D-Ala)](n+1)-di-trans,octa-cis-undecaprenyl diphosphate + di-trans,octa-cis-undecaprenyl diphosphate + H(+). It catalyses the reaction Preferential cleavage: (Ac)2-L-Lys-D-Ala-|-D-Ala. Also transpeptidation of peptidyl-alanyl moieties that are N-acyl substituents of D-alanine.. It participates in cell wall biogenesis; peptidoglycan biosynthesis. Functionally, cell wall formation. Synthesis of cross-linked peptidoglycan from the lipid intermediates. The enzyme has a penicillin-insensitive transglycosylase N-terminal domain (formation of linear glycan strands) and a penicillin-sensitive transpeptidase C-terminal domain (cross-linking of the peptide subunits). The polypeptide is Penicillin-binding protein 1A (mrcA) (Rickettsia conorii (strain ATCC VR-613 / Malish 7)).